We begin with the raw amino-acid sequence, 251 residues long: GTP cyclohydrolase 1 type 2 homolog (251 aa).

5 residues coordinate a divalent metal cation: H64, H65, D102, H219, and E223.

The protein belongs to the GTP cyclohydrolase I type 2/NIF3 family. Homohexamer.

In Chlamydia pneumoniae (Chlamydophila pneumoniae), this protein is GTP cyclohydrolase 1 type 2 homolog.